A 324-amino-acid polypeptide reads, in one-letter code: Acetyl-coenzyme A carboxylase carboxyl transferase subunit alpha (324 aa).

A CoA carboxyltransferase C-terminal domain is found at 37–291 (ILEDKLENLE…DLMIRKTFEQ (255 aa)).

Belongs to the AccA family. In terms of assembly, acetyl-CoA carboxylase is a heterohexamer composed of biotin carboxyl carrier protein (AccB), biotin carboxylase (AccC) and two subunits each of ACCase subunit alpha (AccA) and ACCase subunit beta (AccD).

The protein resides in the cytoplasm. The enzyme catalyses N(6)-carboxybiotinyl-L-lysyl-[protein] + acetyl-CoA = N(6)-biotinyl-L-lysyl-[protein] + malonyl-CoA. It participates in lipid metabolism; malonyl-CoA biosynthesis; malonyl-CoA from acetyl-CoA: step 1/1. Component of the acetyl coenzyme A carboxylase (ACC) complex. First, biotin carboxylase catalyzes the carboxylation of biotin on its carrier protein (BCCP) and then the CO(2) group is transferred by the carboxyltransferase to acetyl-CoA to form malonyl-CoA. This is Acetyl-coenzyme A carboxylase carboxyl transferase subunit alpha from Bacillus cereus (strain G9842).